A 518-amino-acid polypeptide reads, in one-letter code: U-box domain-containing protein 57 (518 aa).

Residues 86 to 142 (EEVRKVHILEEEIVTLKHQADTYLVQKEKAVTAYDQLKHERDNAVQQVNELRDQSTH) are a coiled coil. A Protein kinase domain is found at 159–409 (FKNAREVGDT…RPDLLNEVWI (251 aa)). A U-box domain is found at 434–508 (SVPAAFICPI…HGYLQQQQPN (75 aa)).

It catalyses the reaction S-ubiquitinyl-[E2 ubiquitin-conjugating enzyme]-L-cysteine + [acceptor protein]-L-lysine = [E2 ubiquitin-conjugating enzyme]-L-cysteine + N(6)-ubiquitinyl-[acceptor protein]-L-lysine.. It functions in the pathway protein modification; protein ubiquitination. Functionally, possesses E3 ubiquitin-protein ligase in vitro. May be involved in cell death signaling. The chain is U-box domain-containing protein 57 (PUB57) from Oryza sativa subsp. japonica (Rice).